A 111-amino-acid polypeptide reads, in one-letter code: Cystatin (111 aa).

In terms of domain architecture, Cystatin spans 3 to 103 (GGLSPRDVTD…CRFEVWSRPW (101 aa)). The Secondary area of contact signature appears at 47-51 (QVVSG). Cysteine 65 and cysteine 81 form a disulfide bridge.

This sequence belongs to the cystatin family. In terms of tissue distribution, expressed by the venom gland.

It is found in the secreted. Its function is as follows. Inhibits various C1 cysteine proteases including cathepsin L, papain and cathepsin B. This protein has no toxic activity and its function in the venom is unknown. It may play a role as housekeeping or regulatory protein. The chain is Cystatin from Bitis arietans (African puff adder).